Consider the following 78-residue polypeptide: Large ribosomal subunit protein bL28 (78 aa).

Belongs to the bacterial ribosomal protein bL28 family.

The sequence is that of Large ribosomal subunit protein bL28 from Prochlorococcus marinus (strain MIT 9303).